The chain runs to 371 residues: Fe(3+) ions import ATP-binding protein FbpC (371 aa).

The ABC transporter domain maps to 5–235 (IKIENAQKRY…PANLFVATFI (231 aa)). Position 37–44 (37–44 (GPSGCGKT)) interacts with ATP.

Belongs to the ABC transporter superfamily. Fe(3+) ion importer (TC 3.A.1.10) family. In terms of assembly, the complex is composed of two ATP-binding proteins (FbpC), two transmembrane proteins (FbpB) and a solute-binding protein (FbpA).

It is found in the cell inner membrane. The enzyme catalyses Fe(3+)(out) + ATP + H2O = Fe(3+)(in) + ADP + phosphate + H(+). Part of the ABC transporter complex FbpABC involved in Fe(3+) ions import. Responsible for energy coupling to the transport system. This is Fe(3+) ions import ATP-binding protein FbpC from Fusobacterium nucleatum subsp. nucleatum (strain ATCC 25586 / DSM 15643 / BCRC 10681 / CIP 101130 / JCM 8532 / KCTC 2640 / LMG 13131 / VPI 4355).